A 164-amino-acid chain; its full sequence is Endoribonuclease YbeY (164 aa).

The Zn(2+) site is built by H132, H136, and H142.

This sequence belongs to the endoribonuclease YbeY family. Requires Zn(2+) as cofactor.

It is found in the cytoplasm. In terms of biological role, single strand-specific metallo-endoribonuclease involved in late-stage 70S ribosome quality control and in maturation of the 3' terminus of the 16S rRNA. This Clostridium kluyveri (strain NBRC 12016) protein is Endoribonuclease YbeY.